A 378-amino-acid polypeptide reads, in one-letter code: Erythronate-4-phosphate dehydrogenase (378 aa).

Substrate contacts are provided by Ser-45 and Thr-66. The NAD(+) site is built by Asp-146 and Thr-175. Arg-208 is an active-site residue. NAD(+) is bound at residue Asp-232. The active site involves Glu-237. His-254 acts as the Proton donor in catalysis. Gly-257 lines the NAD(+) pocket. Tyr-258 is a substrate binding site.

It belongs to the D-isomer specific 2-hydroxyacid dehydrogenase family. PdxB subfamily. In terms of assembly, homodimer.

It localises to the cytoplasm. It carries out the reaction 4-phospho-D-erythronate + NAD(+) = (R)-3-hydroxy-2-oxo-4-phosphooxybutanoate + NADH + H(+). It participates in cofactor biosynthesis; pyridoxine 5'-phosphate biosynthesis; pyridoxine 5'-phosphate from D-erythrose 4-phosphate: step 2/5. Its function is as follows. Catalyzes the oxidation of erythronate-4-phosphate to 3-hydroxy-2-oxo-4-phosphonooxybutanoate. The polypeptide is Erythronate-4-phosphate dehydrogenase (Klebsiella pneumoniae (strain 342)).